Reading from the N-terminus, the 138-residue chain is Basic phospholipase A2 vurtoxin (138 aa).

The signal sequence occupies residues 1 to 16 (MRTLWIVAVCLIGVEG). Disulfide bonds link C42-C131, C44-C60, C59-C111, C65-C138, C66-C104, C73-C97, and C91-C102. Ca(2+) contacts are provided by Y43, G45, and G47. Residue H63 is part of the active site. Ca(2+) is bound at residue D64. Residue D105 is part of the active site.

It depends on Ca(2+) as a cofactor. Expressed by the venom gland.

The protein resides in the secreted. It carries out the reaction a 1,2-diacyl-sn-glycero-3-phosphocholine + H2O = a 1-acyl-sn-glycero-3-phosphocholine + a fatty acid + H(+). Snake venom phospholipase A2 that may have a strong anticoagulant activity. Is able to suppress the acetylcholine (ACh)-evoked current mediated by alpha-7 (CHRNA7)-similar nAChRs in L.stagnalis neurons (IC(50)=10.5 uM) and to compete with alpha-bungarotoxin for binding to muscle- and alpha-7 neuronal nAChR types, as well as to AChBPs. In inhibition of alpha-bungarotoxin binding, this toxin is mostly active against T.californica nAChR (IC(50)=0.26 uM), it is moderately active against human alpha-7 nAChR (IC(50)=14 uM), and is not active against L.stagnalis and A.californica AChBP (IC(50)&gt;30 uM). This chain is Basic phospholipase A2 vurtoxin, found in Vipera renardi (Steppe viper).